Reading from the N-terminus, the 100-residue chain is Urease subunit gamma (100 aa).

The protein belongs to the urease gamma subunit family. As to quaternary structure, heterotrimer of UreA (gamma), UreB (beta) and UreC (alpha) subunits. Three heterotrimers associate to form the active enzyme.

The protein resides in the cytoplasm. The enzyme catalyses urea + 2 H2O + H(+) = hydrogencarbonate + 2 NH4(+). It participates in nitrogen metabolism; urea degradation; CO(2) and NH(3) from urea (urease route): step 1/1. The chain is Urease subunit gamma from Mycobacterium ulcerans (strain Agy99).